The primary structure comprises 523 residues: Glutamate--cysteine ligase (523 aa).

The protein belongs to the glutamate--cysteine ligase type 1 family. Type 1 subfamily.

The catalysed reaction is L-cysteine + L-glutamate + ATP = gamma-L-glutamyl-L-cysteine + ADP + phosphate + H(+). It functions in the pathway sulfur metabolism; glutathione biosynthesis; glutathione from L-cysteine and L-glutamate: step 1/2. The sequence is that of Glutamate--cysteine ligase from Baumannia cicadellinicola subsp. Homalodisca coagulata.